The primary structure comprises 239 residues: Ribosomal RNA small subunit methyltransferase G (239 aa).

S-adenosyl-L-methionine contacts are provided by residues G77, F82, 128-129 (AE), and R147. A disordered region spans residues 216 to 239 (KKQSQTPKKFPRKPGTPNKSPIEG).

The protein belongs to the methyltransferase superfamily. RNA methyltransferase RsmG family.

It is found in the cytoplasm. Specifically methylates the N7 position of guanine in position 535 of 16S rRNA. The protein is Ribosomal RNA small subunit methyltransferase G of Bacillus licheniformis (strain ATCC 14580 / DSM 13 / JCM 2505 / CCUG 7422 / NBRC 12200 / NCIMB 9375 / NCTC 10341 / NRRL NRS-1264 / Gibson 46).